The following is a 459-amino-acid chain: Putrescine aminotransferase (459 aa).

Pyridoxal 5'-phosphate is bound by residues 150 to 151 (GT) and Gln274. The residue at position 300 (Lys300) is an N6-(pyridoxal phosphate)lysine. Pyridoxal 5'-phosphate is bound at residue Thr332.

This sequence belongs to the class-III pyridoxal-phosphate-dependent aminotransferase family. Putrescine aminotransferase subfamily. It depends on pyridoxal 5'-phosphate as a cofactor.

The enzyme catalyses an alkane-alpha,omega-diamine + 2-oxoglutarate = an omega-aminoaldehyde + L-glutamate. It carries out the reaction putrescine + 2-oxoglutarate = 1-pyrroline + L-glutamate + H2O. It catalyses the reaction cadaverine + 2-oxoglutarate = 5-aminopentanal + L-glutamate. The protein operates within amine and polyamine degradation; putrescine degradation; 4-aminobutanal from putrescine (transaminase route): step 1/1. In terms of biological role, catalyzes the aminotransferase reaction from putrescine to 2-oxoglutarate, leading to glutamate and 4-aminobutanal, which spontaneously cyclizes to form 1-pyrroline. This is the first step in one of two pathways for putrescine degradation, where putrescine is converted into 4-aminobutanoate (gamma-aminobutyrate or GABA) via 4-aminobutanal. Also functions as a cadaverine transaminase in a a L-lysine degradation pathway to succinate that proceeds via cadaverine, glutarate and L-2-hydroxyglutarate. The protein is Putrescine aminotransferase of Salmonella paratyphi B (strain ATCC BAA-1250 / SPB7).